Consider the following 438-residue polypeptide: MPYFPAVDKVRYEGPDSDSPLAFRHYDADKLILGKPMREHLRMAACYWHTFVWPGADMFGVGTFKRPWQGSGDPLELAIGKAETAFEFFSKLGIDYYSFHDTDVAPEGSSLKEYRNNFAQMIDQLERHQEQTGIKLLWGTANCFSNPRFAAGAASNPDPEVFAYAATQVFSAMNATQRLKGANYVLWGGREGYETLLNTDLRQEREQLGRFMRMVVEHKHKIGFKGDLLIEPKPQEPTKHQYDYDSATVFGFLQQYGLEKEIKVNIEANHATLAGHSFHHEIATAVSLGIFGSIDANRGDPQNGWDTDQFPNSVEEMTLATYEILKAGGFTNGGYNFDSKVRRQSLDEVDLFHGHVAAMDVLALALERAAAMVQNDKLQQFKDQRYAGWQQPFGKSLLAGEFSLESLAKHAFDKDLNPQAVSGRQELLEGVVNRFIYF.

Catalysis depends on residues H100 and D103. E231, E267, H270, D295, D306, D308, and D338 together coordinate Mg(2+).

The protein belongs to the xylose isomerase family. In terms of assembly, homotetramer. Mg(2+) is required as a cofactor.

Its subcellular location is the cytoplasm. The catalysed reaction is alpha-D-xylose = alpha-D-xylulofuranose. This Pseudomonas savastanoi pv. phaseolicola (strain 1448A / Race 6) (Pseudomonas syringae pv. phaseolicola (strain 1448A / Race 6)) protein is Xylose isomerase.